The sequence spans 767 residues: Probable ubiquitin carboxyl-terminal hydrolase creB (767 aa).

The region spanning 49 to 462 (YGMENYGNTC…CAYVLFYQET (414 aa)) is the USP domain. Cys-58 serves as the catalytic Nucleophile. Disordered stretches follow at residues 107–140 (EAEA…DSPE) and 232–263 (ASKQ…KTPN). Polar residues predominate over residues 250 to 263 (SVDQSSSTGSKTPN). His-413 serves as the catalytic Proton acceptor. The interval 490–767 (LKQNGFPQSP…LRKKSFSILS (278 aa)) is disordered. Low complexity-rich tracts occupy residues 540–554 (ESAP…SPLS) and 564–573 (ERVTTVATPP). Residues 574-641 (KNDALAKKER…ASKAEEDRRL (68 aa)) are a coiled coil. The segment covering 577–650 (ALAKKERARE…LSHENGKEKQ (74 aa)) has biased composition (basic and acidic residues). The segment covering 656–667 (RLKRGSKSLSHR) has biased composition (basic residues). Positions 690 to 700 (STLSQTGPTSE) are enriched in polar residues. Residues 701 to 713 (QQQQQQQQQQQQQ) are compositionally biased toward low complexity. The segment covering 731–749 (TIREDEQVNHKDSKHERTG) has biased composition (basic and acidic residues). Positions 750–767 (HGKWRSFSLRKKSFSILS) are enriched in basic residues.

Belongs to the peptidase C19 family. Interacts with creA, creC and qutD.

It carries out the reaction Thiol-dependent hydrolysis of ester, thioester, amide, peptide and isopeptide bonds formed by the C-terminal Gly of ubiquitin (a 76-residue protein attached to proteins as an intracellular targeting signal).. Ubiquitin thioesterase component of the regulatory network controlling carbon source utilization through ubiquitination and deubiquitination involving creA, creB, creC, creD and acrB. Deubiquitinates the creA catabolic repressor and the quinate permease qutD. Also plays a role in response to carbon starvation and the control of extracellular proteases activity. In Aspergillus fumigatus (strain CBS 144.89 / FGSC A1163 / CEA10) (Neosartorya fumigata), this protein is Probable ubiquitin carboxyl-terminal hydrolase creB (creB).